A 194-amino-acid polypeptide reads, in one-letter code: uncharacterized protein (194 aa).

This is an uncharacterized protein from Tomato ringspot virus (isolate raspberry) (ToRSV).